A 408-amino-acid polypeptide reads, in one-letter code: Phosphatidylinositol transfer protein CSR1 (408 aa).

The residue at position 2 (S2) is an N-acetylserine. S2 is modified (phosphoserine). The CRAL-TRIO domain maps to 157–317; the sequence is ETGVIKNLEL…YLGGENDNDL (161 aa).

Belongs to the PITP family. In terms of assembly, forms a complex with 2 TSA2 subunits. Binds phosphatidylinositol (PtdIns).

It is found in the cytoplasm. Its subcellular location is the microsome. The protein resides in the endosome. The catalysed reaction is a 1,2-diacyl-sn-glycero-3-phospho-(1D-myo-inositol)(in) = a 1,2-diacyl-sn-glycero-3-phospho-(1D-myo-inositol)(out). In terms of biological role, non-classical phosphatidylinositol (PtdIns) transfer protein (PITP), which exhibits PtdIns-binding/transfer activity in the absence of detectable PtdCho-binding/transfer activity. Activates SPO14/PLD1 (phospholipase D1) by stimulating phosphoinositide synthesis via the STT4 PtdIns 4-kinase. Modulates ArfGAP function through effects on SPO14 activity. Inhibits phosphatidylcholine degradation by PLB1 (phospholipase B1). May also regulate post-Golgi membrane-trafficking events and have a role resistance to oxidative stress. Inhibits fatty acid synthase activity in response to heme depletion and oleic acid starvation, preventing saturated fatty acid (SFA) accumulation. The chain is Phosphatidylinositol transfer protein CSR1 (CSR1) from Saccharomyces cerevisiae (strain ATCC 204508 / S288c) (Baker's yeast).